The primary structure comprises 1387 residues: Protein CFT1 (1387 aa).

2 disordered regions span residues 440-493 (SMRK…GLNK) and 509-534 (PMSD…SRTS). Positions 444-457 (PKVESADDVFGDHS) are enriched in basic and acidic residues. The segment covering 458 to 471 (ETEDDEDDIYEDDL) has biased composition (acidic residues). Residues 474–491 (TPVNQTTLSKTTSQTNGL) are compositionally biased toward polar residues.

Belongs to the CFT1 family.

The protein localises to the nucleus. RNA-binding component of the cleavage and polyadenylation factor (CPF) complex, which plays a key role in polyadenylation-dependent pre-mRNA 3'-end formation and cooperates with cleavage factors including the CFIA complex and NAB4/CFIB. Involved in poly(A) site recognition. May be involved in coupling transcription termination and mRNA 3'-end formation. This chain is Protein CFT1 (CFT1), found in Coccidioides immitis (strain RS) (Valley fever fungus).